Consider the following 256-residue polypeptide: Major prion protein (256 aa).

The N-terminal stretch at 1–24 (MVKSHIGSWILVLFVAMWSDVGLC) is a signal peptide. An interaction with GRB2, ERI3 and SYN1 region spans residues 25-233 (KKRPKPGGGW…ESQAYYQRGA (209 aa)). The segment at 28–110 (PKPGGGWNTG…QWNKPSKPKT (83 aa)) is disordered. A run of 5 repeats spans residues 54–62 (PQGGGGWGQ), 63–70 (PHGGGWGQ), 71–78 (PHGGGWGQ), 79–86 (PHGGGWGQ), and 87–95 (PHGGGGWGQ). Residues 54-95 (PQGGGGWGQPHGGGWGQPHGGGWGQPHGGGWGQPHGGGGWGQ) are 5 X 8 AA tandem repeats of P-H-G-G-G-W-G-Q. The segment covering 55–97 (QGGGGWGQPHGGGWGQPHGGGWGQPHGGGWGQPHGGGGWGQGG) has biased composition (gly residues). Cu(2+)-binding residues include histidine 64, glycine 65, glycine 66, histidine 72, glycine 73, glycine 74, histidine 80, glycine 81, glycine 82, histidine 88, glycine 90, and glycine 91. Cysteine 182 and cysteine 217 are disulfide-bonded. N-linked (GlcNAc...) asparagine glycans are attached at residues asparagine 184 and asparagine 200. A lipid anchor (GPI-anchor amidated alanine) is attached at alanine 233. Residues 234–256 (SVILFSSPPVILLISFLIFLIVG) constitute a propeptide, removed in mature form.

It belongs to the prion family. Monomer and homodimer. Has a tendency to aggregate into amyloid fibrils containing a cross-beta spine, formed by a steric zipper of superposed beta-strands. Soluble oligomers may represent an intermediate stage on the path to fibril formation. Copper binding may promote oligomerization. Interacts with GRB2, APP, ERI3/PRNPIP and SYN1. Mislocalized cytosolically exposed PrP interacts with MGRN1; this interaction alters MGRN1 subcellular location and causes lysosomal enlargement. Interacts with KIAA1191.

It localises to the cell membrane. It is found in the golgi apparatus. Its function is as follows. Its primary physiological function is unclear. Has cytoprotective activity against internal or environmental stresses. May play a role in neuronal development and synaptic plasticity. May be required for neuronal myelin sheath maintenance. May play a role in iron uptake and iron homeostasis. Soluble oligomers are toxic to cultured neuroblastoma cells and induce apoptosis (in vitro). Association with GPC1 (via its heparan sulfate chains) targets PRNP to lipid rafts. Also provides Cu(2+) or Zn(2+) for the ascorbate-mediated GPC1 deaminase degradation of its heparan sulfate side chains. The protein is Major prion protein (PRNP) of Ovis canadensis (Bighorn sheep).